Reading from the N-terminus, the 225-residue chain is UPF0758 protein BB3258 (225 aa).

The MPN domain maps to Ala-103–Leu-225. Zn(2+)-binding residues include His-174, His-176, and Asp-187. Residues His-174 to Asp-187 carry the JAMM motif motif.

This sequence belongs to the UPF0758 family.

The protein is UPF0758 protein BB3258 of Bordetella bronchiseptica (strain ATCC BAA-588 / NCTC 13252 / RB50) (Alcaligenes bronchisepticus).